Reading from the N-terminus, the 221-residue chain is MASTKPLSRFWEWGKNIVCVGRNYADHVKEMRSTVLSEPVLFLKPSTAYAPEGSPVLMPAYCRNLHHEVELGVLLGKRGEAIPEAAAMDYVAGYALCLDMTARDVQEECKKKGLPWTLAKSFTSSCPVSAFVPKEKIPDPHALRLWLKVNGELRQEGKTSSMIFSIPYIISYVSKIITLEEGDLILTGTPKGVGPIKENDEIEAGIDGVVSMRFKVKRSEY.

The transit peptide at 1–24 (MASTKPLSRFWEWGKNIVCVGRNY) directs the protein to the mitochondrion. Position 22 (R22) interacts with oxalate. Phosphoserine is present on S37. Mg(2+)-binding residues include E68, E70, and D99. At K110 the chain carries N6-acetyllysine. Residue K112 is modified to N6-succinyllysine. Position 120 (K120) interacts with oxalate.

The protein belongs to the FAH family. As to quaternary structure, homodimer. Mg(2+) is required as a cofactor. Requires Mn(2+) as cofactor. In terms of tissue distribution, ubiquitous with higher expression in the liver and the kidney (at protein level).

Its subcellular location is the mitochondrion. The protein resides in the cytoplasm. It localises to the cytosol. The catalysed reaction is oxaloacetate = enol-oxaloacetate. It catalyses the reaction oxaloacetate + H(+) = pyruvate + CO2. The enzyme catalyses a 3-acylpyruvate + H2O = a carboxylate + pyruvate + H(+). It carries out the reaction acetylpyruvate + H2O = acetate + pyruvate + H(+). The catalysed reaction is 3-fumarylpyruvate + H2O = fumarate + pyruvate + H(+). With respect to regulation, oxaloacetate decarboxylation is potently and competitively inhibited by oxalate. In terms of biological role, tautomerase that converts enol-oxaloacetate, a strong inhibitor of succinate dehydrogenase, to the physiological keto form of oxaloacetate. It is thereby required to maximize aerobic respiration efficiency by preventing succinate dehydrogenase inhibition. Also acts as a weak oxaloacetate decarboxylase (ODx), catalyzing the decarboxylation of oxaloacetate (OAA) to pyruvate and CO(2), and as such is likely a regulatory enzyme in the TCA cycle. Also displays acylpyruvase activity, being able to hydrolyze acetylpyruvate and fumarylpyruvate in vitro. The protein is Oxaloacetate tautomerase FAHD1, mitochondrial of Mus musculus (Mouse).